Reading from the N-terminus, the 1394-residue chain is Adhesion and penetration protein autotransporter (1394 aa).

The signal sequence occupies residues 1–25 (MKKTVFRLNFLTACISLGIVSQAWA). The 261-residue stretch at 26–286 (GHTYFGIDYQ…QLVRKSYFDE (261 aa)) folds into the Peptidase S6 domain. Residue Ser243 is part of the active site. 2 disordered regions span residues 848 to 870 (AYSASSNNTPRRRSLETETTPTS) and 995 to 1027 (TLEAKQVEPTAKTQTGEPKVRSRRAARAAFPDT). The region spanning 1140–1394 (VDQAQSAVWT…NVGVKLGYRW (255 aa)) is the Autotransporter domain.

The protein resides in the periplasm. It localises to the secreted. The protein localises to the cell surface. Its subcellular location is the cell outer membrane. In terms of biological role, probable protease; promotes adherence and invasion by directly binding to a host cell structure. In Haemophilus influenzae, this protein is Adhesion and penetration protein autotransporter (hap).